The primary structure comprises 313 residues: Ribosomal RNA small subunit methyltransferase H (313 aa).

S-adenosyl-L-methionine-binding positions include 35-37, Asp55, Phe79, Asp101, and Gln108; that span reads GGH.

The protein belongs to the methyltransferase superfamily. RsmH family.

It is found in the cytoplasm. It carries out the reaction cytidine(1402) in 16S rRNA + S-adenosyl-L-methionine = N(4)-methylcytidine(1402) in 16S rRNA + S-adenosyl-L-homocysteine + H(+). In terms of biological role, specifically methylates the N4 position of cytidine in position 1402 (C1402) of 16S rRNA. The sequence is that of Ribosomal RNA small subunit methyltransferase H from Shigella sonnei (strain Ss046).